A 271-amino-acid chain; its full sequence is MSDEEVEHVEEEYEEEEEAQEEAPPPPAEVPEVHEEVHEVHEPEEVQEEEKPRPRLTAPKIPEGEKVDFDDIQKKRQNKDLMELQALIDSHFEARKKEEEELVALKERIEKRRAERAEQQRIRAEKERERQNRLAEEKARREEEDAKRRAEDDLKKKKALSSMGANYSSYLAKADQKRGKKQTAREMKKKVLAERRKPLNIDHLSEDKLRDKAKELWDTLYQLETDKFEYGEKLKRQKYDITNLRSRIDQAQKHSKKAGTAPKGKVGGRWK.

Over residues 1–21 (MSDEEVEHVEEEYEEEEEAQE) the composition is skewed to acidic residues. The interval 1–74 (MSDEEVEHVE…EKVDFDDIQK (74 aa)) is disordered. S2 carries the post-translational modification N-acetylserine. S2 is modified (phosphoserine). Basic and acidic residues-rich tracts occupy residues 31 to 53 (PEVH…EKPR) and 62 to 74 (PEGE…DIQK). S90 carries the phosphoserine modification. The segment covering 113–155 (RAERAEQQRIRAEKERERQNRLAEEKARREEEDAKRRAEDDLK) has biased composition (basic and acidic residues). Residues 113–194 (RAERAEQQRI…REMKKKVLAE (82 aa)) are disordered. A phosphoserine mark is found at S161, S168, and S169. The span at 183–194 (TAREMKKKVLAE) shows a compositional bias: basic and acidic residues. The residue at position 205 (S205) is a Phosphoserine. A Phosphotyrosine modification is found at Y221. The segment at 248–271 (IDQAQKHSKKAGTAPKGKVGGRWK) is disordered.

It belongs to the troponin T family.

Troponin T is the tropomyosin-binding subunit of troponin, the thin filament regulatory complex which confers calcium-sensitivity to striated muscle actomyosin ATPase activity. The chain is Troponin T, fast skeletal muscle (Tnnt3) from Bos taurus (Bovine).